Reading from the N-terminus, the 875-residue chain is Valine--tRNA ligase (875 aa).

A 'HIGH' region motif is present at residues 43 to 53 (PNVTGVLHMGH). The 'KMSKS' region signature appears at 534 to 538 (KMSKS). K537 is a binding site for ATP. A coiled-coil region spans residues 805 to 875 (GNLINTEEEL…LKESIAALKK (71 aa)).

This sequence belongs to the class-I aminoacyl-tRNA synthetase family. ValS type 1 subfamily. In terms of assembly, monomer.

The protein localises to the cytoplasm. It carries out the reaction tRNA(Val) + L-valine + ATP = L-valyl-tRNA(Val) + AMP + diphosphate. Its function is as follows. Catalyzes the attachment of valine to tRNA(Val). As ValRS can inadvertently accommodate and process structurally similar amino acids such as threonine, to avoid such errors, it has a 'posttransfer' editing activity that hydrolyzes mischarged Thr-tRNA(Val) in a tRNA-dependent manner. This is Valine--tRNA ligase from Phocaeicola vulgatus (strain ATCC 8482 / DSM 1447 / JCM 5826 / CCUG 4940 / NBRC 14291 / NCTC 11154) (Bacteroides vulgatus).